The sequence spans 600 residues: MATEHIENKLKLLPDKPGCYLMKDVNGNVIYVGKSKNLKNRVRSYFKSKQVGRRAELVREIRDFDIITVSSDKESFLLEITLIKKYQPYYNVQLKQGTGYPYIEITNERDPQTRLTSIVHKDHGYYFGPYPNVYAAQATLKFIQKVWPLRRCTGHQGRPCLYYHMGQCLGACFKEVPKSTYDAQIRKIKRFLNGDIAQVKQDLTEKMTQASMDLEFERAAEIRDQLKYIEQTVEKQKIISNDHTQRDIFNFYVDKSWISIQIFFLRQAKLLRRETRLFPLTDTNDPQDAFVSFIAQFYGQRNRVLPKEVLVPAGMDNESLSEVLKVPVRTPQRGQKKALLEMAHDNAKLKLDEKFRLLELGNRKTKGAQKEIFDALGLPYGHRIESFDHSHIQGADPVSALVVFTDGEADKHEYRKYKLKGEVEHQNAADEVGNTREVVRRRYSRLLKEHKKMPDLILMDGGQIQVEACLDVLRNELNVNIPVAGMVKDDHHRTNHLIFGDPTKGEELKLIPLDPKSEGFYLMTRIQDEVHRFAITFHRRTHAKNALSSKLDEIKGIGPKSRNKLLRKFGSLKKIKEASVDELREAGLTLPQAQTVKLSL.

In terms of domain architecture, GIY-YIG spans 15 to 92; sequence DKPGCYLMKD…IKKYQPYYNV (78 aa). Residues 197-232 enclose the UVR domain; that stretch reads AQVKQDLTEKMTQASMDLEFERAAEIRDQLKYIEQT.

The protein belongs to the UvrC family. In terms of assembly, interacts with UvrB in an incision complex.

The protein localises to the cytoplasm. In terms of biological role, the UvrABC repair system catalyzes the recognition and processing of DNA lesions. UvrC both incises the 5' and 3' sides of the lesion. The N-terminal half is responsible for the 3' incision and the C-terminal half is responsible for the 5' incision. This chain is UvrABC system protein C, found in Lactobacillus johnsonii (strain CNCM I-12250 / La1 / NCC 533).